The chain runs to 307 residues: Fructokinase (307 aa).

The protein belongs to the carbohydrate kinase PfkB family.

It catalyses the reaction D-fructose + ATP = D-fructose 6-phosphate + ADP + H(+). The protein is Fructokinase (cscK) of Escherichia coli.